A 624-amino-acid chain; its full sequence is Phosphoenolpyruvate carboxykinase [GTP] (624 aa).

Residues Arg88 and 222–224 contribute to the substrate site; that span reads YGG. Mn(2+) is bound by residues Lys231 and His250. Ser272 is a binding site for substrate. 273-278 lines the GTP pocket; that stretch reads MCGKTS. Cys274 is a catalytic residue. Asp291 contacts Mn(2+). 386 to 388 provides a ligand contact to substrate; that stretch reads NAR. Positions 388 and 420 each coordinate GTP.

The protein belongs to the phosphoenolpyruvate carboxykinase [GTP] family. It depends on Mn(2+) as a cofactor.

It localises to the cytoplasm. The catalysed reaction is oxaloacetate + GTP = phosphoenolpyruvate + GDP + CO2. The protein operates within carbohydrate biosynthesis; gluconeogenesis. Catalyzes the conversion of oxaloacetate (OAA) to phosphoenolpyruvate (PEP), the rate-limiting step in the metabolic pathway that produces glucose from lactate and other precursors derived from the citric acid cycle. The protein is Phosphoenolpyruvate carboxykinase [GTP] of Pyrococcus furiosus (strain ATCC 43587 / DSM 3638 / JCM 8422 / Vc1).